A 277-amino-acid polypeptide reads, in one-letter code: Large ribosomal subunit protein uL2c (277 aa).

The interval 30 to 60 (RKKLTSGQHSGKGRNNRGIITSRHRGGGHKR) is disordered. Basic residues predominate over residues 51–60 (SRHRGGGHKR).

This sequence belongs to the universal ribosomal protein uL2 family. In terms of assembly, part of the 50S ribosomal subunit.

The protein resides in the plastid. The protein localises to the chloroplast. This is Large ribosomal subunit protein uL2c (rpl2) from Angiopteris evecta (Mule's foot fern).